Consider the following 693-residue polypeptide: Follicle-stimulating hormone receptor (693 aa).

The first 18 residues, methionine 1–cysteine 18, serve as a signal peptide directing secretion. 2 cysteine pairs are disulfide-bonded: cysteine 18/cysteine 25 and cysteine 23/cysteine 32. Residues glutamine 19–threonine 46 enclose the LRRNT domain. Residues glutamine 19–arginine 366 are Extracellular-facing. Asparagine 47 carries N-linked (GlcNAc...) asparagine glycosylation. 9 LRR repeats span residues threonine 49–leucine 72, glutamate 73–leucine 97, histidine 98–histidine 118, leucine 119–serine 143, phenylalanine 144–serine 169, serine 170–glycine 192, threonine 193–glycine 216, alanine 217–leucine 240, and isoleucine 241–serine 259. N-linked (GlcNAc...) asparagine glycosylation is found at asparagine 191 and asparagine 199. Asparagine 268 is a glycosylation site (N-linked (GlcNAc...) asparagine). 4 disulfide bridges follow: cysteine 275–cysteine 346, cysteine 276–cysteine 292, cysteine 276–cysteine 356, and cysteine 292–cysteine 338. A helical membrane pass occupies residues valine 367–leucine 387. Topologically, residues isoleucine 388–arginine 398 are cytoplasmic. A helical membrane pass occupies residues phenylalanine 399 to valine 421. Over aspartate 422–asparagine 443 the chain is Extracellular. Cysteine 442 and cysteine 517 are disulfide-bonded. Residues alanine 444–leucine 465 traverse the membrane as a helical segment. Over glutamate 466–histidine 485 the chain is Cytoplasmic. Residues alanine 486–valine 508 traverse the membrane as a helical segment. The Extracellular portion of the chain corresponds to serine 509–glutamine 528. A helical transmembrane segment spans residues alanine 529–isoleucine 550. Over cysteine 551–arginine 573 the chain is Cytoplasmic. A helical membrane pass occupies residues methionine 574 to leucine 597. The Extracellular segment spans residues lysine 598–lysine 608. Residues isoleucine 609–threonine 630 traverse the membrane as a helical segment. Residues lysine 631–asparagine 693 lie on the Cytoplasmic side of the membrane.

This sequence belongs to the G-protein coupled receptor 1 family. FSH/LSH/TSH subfamily. In terms of assembly, homotrimer. Functions as a homotrimer binding the FSH hormone heterodimer composed of CGA and FSHB.

The protein resides in the cell membrane. Its function is as follows. G protein-coupled receptor for follitropin, the follicle-stimulating hormone. Through cAMP production activates the downstream PI3K-AKT and ERK1/ERK2 signaling pathways. The chain is Follicle-stimulating hormone receptor (FSHR) from Cairina moschata (Muscovy duck).